A 498-amino-acid chain; its full sequence is Cytochrome P450 monooxygenase aflU (498 aa).

Residues 5–27 (TVYTSLIGLLVALTVRSIYRVYF) traverse the membrane as a helical segment. Residues N259 and N354 are each glycosylated (N-linked (GlcNAc...) asparagine). C438 contributes to the heme binding site.

Belongs to the cytochrome P450 family. Heme serves as cofactor.

It is found in the membrane. The protein operates within mycotoxin biosynthesis; aflatoxin biosynthesis. In terms of biological role, cytochrome P450 monooxygenase; part of the gene cluster that mediates the biosynthesis of aflatoxins, a group of polyketide-derived furanocoumarins, and part of the most toxic and carcinogenic compounds among the known mycotoxins. The four major aflatoxins produced by A.parasiticus are aflatoxin B1 (AFB1), aflatoxin B2 (AFB2), aflatoxin G1 (AFG1) and aflatoxin G2 (AFG2). Within the aflatoxin pathway, the cytochrome P450 monooxygenase aflU is involved in the last steps in which OMST is converted to aflatoxins B1 and G1, and DHOMST to aflatoxins B2 and G2. The biosynthesis of aflatoxins begins with the norsolorinic acid synthase aflC that combines a hexanoyl starter unit produced by the fatty acid synthase aflA/aflB and 7 malonyl-CoA extender units to synthesize the precursor NOR. The second step is the conversion of NOR to averantin and requires the norsolorinic acid ketoreductase aflD, which catalyzes the dehydration of norsolorinic acid to form (1'S)-averantin. The norsolorinic acid reductases aflE and aflF may also play a role in the conversion of NOR to AVN. The cytochrome P450 monooxygenase aflG then catalyzes the hydroxylation of AVN to 5'hydroxyaverantin (HAVN). The next step is performed by the 5'-hydroxyaverantin dehydrogenase aflH that transforms HAVN to 5'-oxoaverantin (OAVN) which is further converted to averufin (AVF) by aflK that plays a dual role in the pathway, as a 5'-oxoaverantin cyclase that mediates conversion of 5'-oxoaverantin, as well as a versicolorin B synthase in a later step in the pathway. The averufin oxidase aflI catalyzes the conversion of AVF to versiconal hemiacetal acetate (VHA). VHA is then the substrate for the versiconal hemiacetal acetate esterase aflJ to yield versiconal (VAL). Versicolorin B synthase aflK then converts VAL to versicolorin B (VERB) by closing the bisfuran ring of aflatoxin which is required for DNA-binding, thus giving to aflatoxin its activity as a mutagen. Then, the activity of the versicolorin B desaturase aflL leads to versicolorin A (VERA). A branch point starts from VERB since it can also be converted to dihydrodemethylsterigmatocystin (DMDHST), probably also by aflL, VERA being a precursor for aflatoxins B1 and G1, and DMDHST for aflatoxins B2 and G2. Next, the versicolorin reductase aflM and the cytochrome P450 monooxygenase aflN are involved in conversion of VERA to demethylsterigmatocystin (DMST). AflX and aflY seem also involved in this step, through probable aflX-mediated epoxide ring-opening step following versicolorin A oxidation and aflY-mediated Baeyer-Villiger oxidation required for the formation of the xanthone ring. The methyltransferase aflO then leads to the modification of DMST to sterigmatocystin (ST), and of DMDHST to dihydrosterigmatocystin (DHST). Both ST and DHST are then substrates of the O-methyltransferase aflP to yield O-methylsterigmatocystin (OMST) and dihydro-O-methylsterigmatocystin (DHOMST), respectively. Finally OMST is converted to aflatoxins B1 and G1, and DHOMST to aflatoxins B2 and G2, via the action of several enzymes including O-methylsterigmatocystin oxidoreductase aflQ, the cytochrome P450 monooxygenase aflU, but also the NADH-dependent flavin oxidoreductase nadA which is specifically required for the synthesis of AFG1. This is Cytochrome P450 monooxygenase aflU from Aspergillus parasiticus (strain ATCC 56775 / NRRL 5862 / SRRC 143 / SU-1).